A 162-amino-acid chain; its full sequence is UPF0114 protein PA4574 (162 aa).

Helical transmembrane passes span 10–32 (YASR…ALTI), 53–75 (LILV…MVMI), and 136–156 (LMWY…MGYL).

Belongs to the UPF0114 family.

Its subcellular location is the cell membrane. This chain is UPF0114 protein PA4574, found in Pseudomonas aeruginosa (strain ATCC 15692 / DSM 22644 / CIP 104116 / JCM 14847 / LMG 12228 / 1C / PRS 101 / PAO1).